A 385-amino-acid polypeptide reads, in one-letter code: DNA replication and repair protein RecF (385 aa).

Residue 30 to 37 coordinates ATP; sequence GSNGFGKT.

This sequence belongs to the RecF family.

It localises to the cytoplasm. Functionally, the RecF protein is involved in DNA metabolism; it is required for DNA replication and normal SOS inducibility. RecF binds preferentially to single-stranded, linear DNA. It also seems to bind ATP. This Mycobacterium avium (strain 104) protein is DNA replication and repair protein RecF.